A 562-amino-acid polypeptide reads, in one-letter code: Arginine--tRNA ligase (562 aa).

Residues proline 121–histidine 131 carry the 'HIGH' region motif.

Belongs to the class-I aminoacyl-tRNA synthetase family. In terms of assembly, monomer.

It localises to the cytoplasm. It catalyses the reaction tRNA(Arg) + L-arginine + ATP = L-arginyl-tRNA(Arg) + AMP + diphosphate. This chain is Arginine--tRNA ligase, found in Lactiplantibacillus plantarum (strain ATCC BAA-793 / NCIMB 8826 / WCFS1) (Lactobacillus plantarum).